The sequence spans 254 residues: PF03932 family protein CutC (254 aa).

The protein belongs to the CutC family.

The protein localises to the cytoplasm. The chain is PF03932 family protein CutC from Yersinia pestis bv. Antiqua (strain Angola).